A 142-amino-acid chain; its full sequence is Large ribosomal subunit protein uL13 (142 aa).

This sequence belongs to the universal ribosomal protein uL13 family. Part of the 50S ribosomal subunit.

In terms of biological role, this protein is one of the early assembly proteins of the 50S ribosomal subunit, although it is not seen to bind rRNA by itself. It is important during the early stages of 50S assembly. The sequence is that of Large ribosomal subunit protein uL13 from Citrifermentans bemidjiense (strain ATCC BAA-1014 / DSM 16622 / JCM 12645 / Bem) (Geobacter bemidjiensis).